The sequence spans 615 residues: uncharacterized protein (615 aa).

Composition is skewed to polar residues over residues methionine 1 to serine 11, leucine 41 to valine 55, and threonine 128 to proline 140. 2 disordered regions span residues methionine 1–valine 61 and histidine 97–serine 149. Phosphoserine is present on residues serine 149 and serine 152. Residues leucine 181–serine 217 are disordered. Residues serine 219 and serine 275 each carry the phosphoserine modification. Disordered stretches follow at residues lysine 266–glycine 481, arginine 493–phenylalanine 565, and glycine 586–glutamine 615. The span at arginine 272–aspartate 283 shows a compositional bias: polar residues. Residues threonine 276 and threonine 297 each carry the phosphothreonine modification. Basic and acidic residues predominate over residues glutamate 312 to glutamate 323. The segment covering proline 356–serine 376 has biased composition (low complexity). Over residues proline 505–threonine 522 the composition is skewed to polar residues. Threonine 514 carries the phosphothreonine modification. Position 516 is a phosphoserine (serine 516). A compositionally biased stretch (basic and acidic residues) spans glycine 586–alanine 599. Positions valine 600–glutamine 615 are enriched in acidic residues.

This is an uncharacterized protein from Schizosaccharomyces pombe (strain 972 / ATCC 24843) (Fission yeast).